The chain runs to 248 residues: tRNA pseudouridine synthase A (248 aa).

Catalysis depends on Asp52, which acts as the Nucleophile. Tyr111 is a substrate binding site.

The protein belongs to the tRNA pseudouridine synthase TruA family. Homodimer.

It carries out the reaction uridine(38/39/40) in tRNA = pseudouridine(38/39/40) in tRNA. Its function is as follows. Formation of pseudouridine at positions 38, 39 and 40 in the anticodon stem and loop of transfer RNAs. In Methylocella silvestris (strain DSM 15510 / CIP 108128 / LMG 27833 / NCIMB 13906 / BL2), this protein is tRNA pseudouridine synthase A.